The chain runs to 264 residues: ATP synthase subunit a (264 aa).

6 helical membrane-spanning segments follow: residues 29–49 (TWHI…LWIF), 87–107 (NALI…MNFM), 134–154 (DVNI…YYSI), 177–197 (IPVN…SLAL), 208–228 (LIFI…SLGV), and 235–255 (LIFH…LTIV).

This sequence belongs to the ATPase A chain family. In terms of assembly, F-type ATPases have 2 components, CF(1) - the catalytic core - and CF(0) - the membrane proton channel. CF(1) has five subunits: alpha(3), beta(3), gamma(1), delta(1), epsilon(1). CF(0) has three main subunits: a(1), b(2) and c(9-12). The alpha and beta chains form an alternating ring which encloses part of the gamma chain. CF(1) is attached to CF(0) by a central stalk formed by the gamma and epsilon chains, while a peripheral stalk is formed by the delta and b chains.

Its subcellular location is the cell inner membrane. In terms of biological role, key component of the proton channel; it plays a direct role in the translocation of protons across the membrane. In Shewanella sp. (strain ANA-3), this protein is ATP synthase subunit a.